Here is a 257-residue protein sequence, read N- to C-terminus: Protein YIPF5 (257 aa).

The Cytoplasmic portion of the chain corresponds to 1–124 (MSGFDNLNSG…RASDGSIMNE (124 aa)). Residues 75-106 (PPTPQTFYGDSFEEEPPLLEELGINFDHIWQK) form an interaction with Sec23 region. Residues 125–145 (TDLAGPVVFCLAFGATLLLAG) form a helical membrane-spanning segment. K146 is a topological domain (lumenal). The chain crosses the membrane as a helical span at residues 147 to 167 (IQFGYVYGISAIGCLGMFCLL). The Cytoplasmic portion of the chain corresponds to 168–173 (NLMSMT). The helical transmembrane segment at 174–194 (GVSFGCVASVLGYCLLPMILL) threads the bilayer. Over 195-196 (SS) the chain is Lumenal. Residues 197-217 (FAVVFSLQGMVGILLTATIIG) form a helical membrane-spanning segment. Residues 218 to 236 (WCSFSASKIFISALAMDGQ) lie on the Cytoplasmic side of the membrane. The chain crosses the membrane as a helical span at residues 237–257 (QLLVAYPCALLYGVFALISVF).

The protein belongs to the YIP1 family. As to quaternary structure, interacts with the COPII coat components Sec23 (SEC23A and/or SEC23B) and Sec24 (SEC24A and/or SEC24B). Interacts with YIF1A. May interact with RAB1A. Interacts with YIPF3 and YIPF4.

It is found in the endoplasmic reticulum membrane. Its subcellular location is the golgi apparatus. It localises to the cis-Golgi network membrane. The protein localises to the cytoplasmic vesicle. The protein resides in the COPII-coated vesicle. Plays a role in transport between endoplasmic reticulum and Golgi. In pancreatic beta cells, required to transport proinsulin from endoplasmic reticulum into the Golgi. This chain is Protein YIPF5, found in Rattus norvegicus (Rat).